We begin with the raw amino-acid sequence, 158 residues long: 2-C-methyl-D-erythritol 2,4-cyclodiphosphate synthase (158 aa).

A divalent metal cation-binding residues include Asp-10 and His-12. Residues 10–12 and 36–37 each bind 4-CDP-2-C-methyl-D-erythritol 2-phosphate; these read DVH and HS. A divalent metal cation is bound at residue His-44. Residues 58 to 60, 63 to 67, and Arg-144 each bind 4-CDP-2-C-methyl-D-erythritol 2-phosphate; these read DIG and FSDTD.

This sequence belongs to the IspF family. Homotrimer. Requires a divalent metal cation as cofactor.

It catalyses the reaction 4-CDP-2-C-methyl-D-erythritol 2-phosphate = 2-C-methyl-D-erythritol 2,4-cyclic diphosphate + CMP. It functions in the pathway isoprenoid biosynthesis; isopentenyl diphosphate biosynthesis via DXP pathway; isopentenyl diphosphate from 1-deoxy-D-xylulose 5-phosphate: step 4/6. In terms of biological role, involved in the biosynthesis of isopentenyl diphosphate (IPP) and dimethylallyl diphosphate (DMAPP), two major building blocks of isoprenoid compounds. Catalyzes the conversion of 4-diphosphocytidyl-2-C-methyl-D-erythritol 2-phosphate (CDP-ME2P) to 2-C-methyl-D-erythritol 2,4-cyclodiphosphate (ME-CPP) with a corresponding release of cytidine 5-monophosphate (CMP). This is 2-C-methyl-D-erythritol 2,4-cyclodiphosphate synthase from Burkholderia vietnamiensis (strain G4 / LMG 22486) (Burkholderia cepacia (strain R1808)).